Consider the following 465-residue polypeptide: Chromosomal replication initiator protein DnaA (465 aa).

Positions 1–72 are domain I, interacts with DnaA modulators; it reads MRTKQLWQVA…ETLSLLLGRP (72 aa). Residues 72-117 are domain II; it reads PIAVHFTVHGQDDEEHPVQRRPQRRALASEEGSASKQLSLTPSPEH. The disordered stretch occupies residues 80 to 118; sequence HGQDDEEHPVQRRPQRRALASEEGSASKQLSLTPSPEHG. The span at 103-113 shows a compositional bias: polar residues; it reads GSASKQLSLTP. The tract at residues 118–334 is domain III, AAA+ region; that stretch reads GLNPRYTFEK…GALNRIVALA (217 aa). ATP is bound by residues G162, G164, K165, and T166. Residues 335–465 are domain IV, binds dsDNA; it reads QLTHQPITLA…DAKAPLASRH (131 aa).

Belongs to the DnaA family. As to quaternary structure, oligomerizes as a right-handed, spiral filament on DNA at oriC.

The protein localises to the cytoplasm. Its function is as follows. Plays an essential role in the initiation and regulation of chromosomal replication. ATP-DnaA binds to the origin of replication (oriC) to initiate formation of the DNA replication initiation complex once per cell cycle. Binds the DnaA box (a 9 base pair repeat at the origin) and separates the double-stranded (ds)DNA. Forms a right-handed helical filament on oriC DNA; dsDNA binds to the exterior of the filament while single-stranded (ss)DNA is stabiized in the filament's interior. The ATP-DnaA-oriC complex binds and stabilizes one strand of the AT-rich DNA unwinding element (DUE), permitting loading of DNA polymerase. After initiation quickly degrades to an ADP-DnaA complex that is not apt for DNA replication. Binds acidic phospholipids. This chain is Chromosomal replication initiator protein DnaA, found in Thermomicrobium roseum (strain ATCC 27502 / DSM 5159 / P-2).